Reading from the N-terminus, the 346-residue chain is tRNA N6-adenosine threonylcarbamoyltransferase (346 aa).

Fe cation-binding residues include His-111 and His-115. Substrate is bound by residues 134–138, Asp-167, Gly-180, Asp-184, and Asn-279; that span reads LVSGG. A Fe cation-binding site is contributed by Asp-307.

Belongs to the KAE1 / TsaD family. Fe(2+) is required as a cofactor.

Its subcellular location is the cytoplasm. The enzyme catalyses L-threonylcarbamoyladenylate + adenosine(37) in tRNA = N(6)-L-threonylcarbamoyladenosine(37) in tRNA + AMP + H(+). Required for the formation of a threonylcarbamoyl group on adenosine at position 37 (t(6)A37) in tRNAs that read codons beginning with adenine. Is involved in the transfer of the threonylcarbamoyl moiety of threonylcarbamoyl-AMP (TC-AMP) to the N6 group of A37, together with TsaE and TsaB. TsaD likely plays a direct catalytic role in this reaction. This Nostoc sp. (strain PCC 7120 / SAG 25.82 / UTEX 2576) protein is tRNA N6-adenosine threonylcarbamoyltransferase.